We begin with the raw amino-acid sequence, 241 residues long: Pyridoxal phosphate phosphatase PHOSPHO2 (241 aa).

Asp-8 (nucleophile) is an active-site residue. Residues Asp-8 and Asp-10 each coordinate Mg(2+). Catalysis depends on Asp-10, which acts as the Proton donor. Residues Asp-19 and Asp-99 each coordinate substrate. Residue Asp-179 participates in Mg(2+) binding.

The protein belongs to the HAD-like hydrolase superfamily. PHOSPHO family. Requires Mg(2+) as cofactor.

The catalysed reaction is pyridoxal 5'-phosphate + H2O = pyridoxal + phosphate. Phosphatase that has high activity toward pyridoxal 5'-phosphate (PLP). Also active at much lower level toward pyrophosphate, phosphoethanolamine (PEA), phosphocholine (PCho), phospho-l-tyrosine, fructose-6-phosphate, p-nitrophenyl phosphate, and h-glycerophosphate. The chain is Pyridoxal phosphate phosphatase PHOSPHO2 (PHOSPHO2) from Homo sapiens (Human).